The chain runs to 916 residues: Protein translocase subunit SecA (916 aa).

Residues Gln87, 105 to 109 (GEGKT), and Asp507 each bind ATP. Positions 900, 902, 911, and 912 each coordinate Zn(2+).

It belongs to the SecA family. In terms of assembly, monomer and homodimer. Part of the essential Sec protein translocation apparatus which comprises SecA, SecYEG and auxiliary proteins SecDF-YajC and YidC. Requires Zn(2+) as cofactor.

The protein resides in the cell inner membrane. The protein localises to the cytoplasm. The enzyme catalyses ATP + H2O + cellular proteinSide 1 = ADP + phosphate + cellular proteinSide 2.. In terms of biological role, part of the Sec protein translocase complex. Interacts with the SecYEG preprotein conducting channel. Has a central role in coupling the hydrolysis of ATP to the transfer of proteins into and across the cell membrane, serving both as a receptor for the preprotein-SecB complex and as an ATP-driven molecular motor driving the stepwise translocation of polypeptide chains across the membrane. The polypeptide is Protein translocase subunit SecA (Neisseria gonorrhoeae (strain NCCP11945)).